The sequence spans 338 residues: Mitochondrial transcription factor 1 (338 aa).

Residues leucine 23, aspartate 76, aspartate 100, and asparagine 136 each coordinate S-adenosyl-L-methionine.

This sequence belongs to the class I-like SAM-binding methyltransferase superfamily. rRNA adenine N(6)-methyltransferase family.

It is found in the mitochondrion. Functionally, mitochondrial transcription factor that confers selective promoter recognition on the core subunit of the yeast mitochondrial RNA polymerase. Interacts with DNA in a non-specific manner. This chain is Mitochondrial transcription factor 1 (MTF1), found in Lachancea kluyveri (Yeast).